The primary structure comprises 259 residues: Ribonuclease HII (259 aa).

A disordered region spans residues 1-26 (MLSTPPKLPSAHGPVHFPRRSGTGMN). Residues 55-243 (APVAGADEAG…VRAQQLVLFE (189 aa)) form the RNase H type-2 domain. Asp61, Glu62, and Asp152 together coordinate a divalent metal cation.

The protein belongs to the RNase HII family. The cofactor is Mn(2+). Requires Mg(2+) as cofactor.

The protein resides in the cytoplasm. It carries out the reaction Endonucleolytic cleavage to 5'-phosphomonoester.. Endonuclease that specifically degrades the RNA of RNA-DNA hybrids. The chain is Ribonuclease HII from Azorhizobium caulinodans (strain ATCC 43989 / DSM 5975 / JCM 20966 / LMG 6465 / NBRC 14845 / NCIMB 13405 / ORS 571).